The chain runs to 683 residues: Methionine--tRNA ligase (683 aa).

The 'HIGH' region motif lies at 15-25 (PYANGPIHLGH). The Zn(2+) site is built by C146, C149, C159, and C162. The 'KMSKS' region motif lies at 332-336 (KMSKS). Residue K335 coordinates ATP. Positions 581-683 (DFCKVDLRVA…AGAKAGQRVK (103 aa)) constitute a tRNA-binding domain.

It belongs to the class-I aminoacyl-tRNA synthetase family. MetG type 1 subfamily. As to quaternary structure, homodimer. The cofactor is Zn(2+).

The protein localises to the cytoplasm. It catalyses the reaction tRNA(Met) + L-methionine + ATP = L-methionyl-tRNA(Met) + AMP + diphosphate. In terms of biological role, is required not only for elongation of protein synthesis but also for the initiation of all mRNA translation through initiator tRNA(fMet) aminoacylation. In Histophilus somni (strain 2336) (Haemophilus somnus), this protein is Methionine--tRNA ligase.